A 421-amino-acid chain; its full sequence is Synaptotagmin-12 (421 aa).

Topologically, residues 1 to 18 (MAVDVTEYHLSVIKSPPG) are vesicular. Residues 19-39 (WEVGVYAAGALALLGIAAVSL) traverse the membrane as a helical segment. The Cytoplasmic portion of the chain corresponds to 40–421 (WKLWTSGSFP…VSMWHPVRRN (382 aa)). S97 is modified (phosphoserine; by PKA). Phosphoserine is present on residues S99 and S214. C2 domains are found at residues 152–272 (TLGQ…SGWL) and 283–416 (AVGE…SMWH).

This sequence belongs to the synaptotagmin family. In terms of assembly, homodimer. Can also form heterodimers. Interacts with SYT1. In terms of processing, phosphorylation of Ser-97 is required for mossy-fiber long-term potentiation. Expressed in the brain, specifically by neurons in the hippocampus, and in the adrenal medulla (at protein level).

It is found in the cytoplasmic vesicle. The protein resides in the secretory vesicle. The protein localises to the synaptic vesicle membrane. Functionally, synaptic vesicle phosphoprotein that enhances spontaneous neurotransmitter release but does not effect induced neurotransmitter release. Unlike other synaptotagmins, it does not bind Ca(2+) or phospholipids. Essential for mossy-fiber long-term potentiation in the hippocampus. In Mus musculus (Mouse), this protein is Synaptotagmin-12.